A 167-amino-acid chain; its full sequence is Small ribosomal subunit protein uS5 (167 aa).

An S5 DRBM domain is found at 12-75; that stretch reads LQEKLVQVNR…EAARRNMIQV (64 aa).

It belongs to the universal ribosomal protein uS5 family. As to quaternary structure, part of the 30S ribosomal subunit. Contacts proteins S4 and S8.

Functionally, with S4 and S12 plays an important role in translational accuracy. Its function is as follows. Located at the back of the 30S subunit body where it stabilizes the conformation of the head with respect to the body. The polypeptide is Small ribosomal subunit protein uS5 (Alcanivorax borkumensis (strain ATCC 700651 / DSM 11573 / NCIMB 13689 / SK2)).